Here is a 554-residue protein sequence, read N- to C-terminus: Probable urocanate hydratase (554 aa).

Residues 49–50, glutamine 127, glutamate 194, 240–241, 261–265, 271–272, and tyrosine 320 contribute to the NAD(+) site; these read GG, NA, QTAAH, and YI. The active site involves cysteine 408. Glycine 490 serves as a coordination point for NAD(+).

Belongs to the urocanase family. The cofactor is NAD(+).

It localises to the cytoplasm. It carries out the reaction 4-imidazolone-5-propanoate = trans-urocanate + H2O. The protein operates within amino-acid degradation; L-histidine degradation into L-glutamate; N-formimidoyl-L-glutamate from L-histidine: step 2/3. Functionally, catalyzes the conversion of urocanate to 4-imidazolone-5-propionate. The sequence is that of Probable urocanate hydratase from Thermoplasma acidophilum (strain ATCC 25905 / DSM 1728 / JCM 9062 / NBRC 15155 / AMRC-C165).